Reading from the N-terminus, the 211-residue chain is MQLKNPILGLCQQATFMLSAAKVDQCPDDEGFEVAFAGRSNAGKSSALNTLTHASLARTSKTPGRTQLLNFFGLDEDRRLVDLPGYGYAKVPIPLKLHWQRHLEAYLGSRESLKGLILMMDIRHPMTDFDLLMLDWAIASHMPMHILLTKADKLTYGAAKNTLLKVQAEIRKGWGDAVSIQLFSAPKRMGLEEAYTVLAGWMELEDKAPAE.

Residues 30–204 form the EngB-type G domain; the sequence is EGFEVAFAGR…YTVLAGWMEL (175 aa). Residues 38 to 45, 64 to 68, 82 to 85, 149 to 152, and 182 to 185 contribute to the GTP site; these read GRSNAGKS, GRTQL, DLPG, TKAD, and LFSA. Residues serine 45 and threonine 66 each contribute to the Mg(2+) site.

The protein belongs to the TRAFAC class TrmE-Era-EngA-EngB-Septin-like GTPase superfamily. EngB GTPase family. It depends on Mg(2+) as a cofactor.

Functionally, necessary for normal cell division and for the maintenance of normal septation. This chain is Probable GTP-binding protein EngB, found in Pseudomonas syringae pv. tomato (strain ATCC BAA-871 / DC3000).